The chain runs to 460 residues: Exodeoxyribonuclease 7 large subunit (460 aa).

The interval 438 to 460 is disordered; the sequence is ARVEKVNREEEKQSGSQKNGTRD. The span at 439-450 shows a compositional bias: basic and acidic residues; sequence RVEKVNREEEKQ. Residues 451 to 460 are compositionally biased toward polar residues; that stretch reads SGSQKNGTRD.

The protein belongs to the XseA family. Heterooligomer composed of large and small subunits.

The protein resides in the cytoplasm. The enzyme catalyses Exonucleolytic cleavage in either 5'- to 3'- or 3'- to 5'-direction to yield nucleoside 5'-phosphates.. Functionally, bidirectionally degrades single-stranded DNA into large acid-insoluble oligonucleotides, which are then degraded further into small acid-soluble oligonucleotides. The polypeptide is Exodeoxyribonuclease 7 large subunit (Brevibacillus brevis (strain 47 / JCM 6285 / NBRC 100599)).